Reading from the N-terminus, the 490-residue chain is Betaine aldehyde dehydrogenase (490 aa).

S26, I27, and D93 together coordinate K(+). 150 to 152 (GAW) contributes to the NAD(+) binding site. K162 serves as the catalytic Charge relay system. NAD(+) is bound by residues 176–179 (KPSE) and 230–233 (GVET). Residue L246 participates in K(+) binding. The active-site Proton acceptor is the E252. Positions 254, 286, and 387 each coordinate NAD(+). Catalysis depends on C286, which acts as the Nucleophile. C286 bears the Cysteine sulfenic acid (-SOH) mark. K(+) contacts are provided by K457 and G460. The Charge relay system role is filled by E464.

Belongs to the aldehyde dehydrogenase family. Dimer of dimers. It depends on K(+) as a cofactor.

It carries out the reaction betaine aldehyde + NAD(+) + H2O = glycine betaine + NADH + 2 H(+). It functions in the pathway amine and polyamine biosynthesis; betaine biosynthesis via choline pathway; betaine from betaine aldehyde: step 1/1. Functionally, involved in the biosynthesis of the osmoprotectant glycine betaine. Catalyzes the irreversible oxidation of betaine aldehyde to the corresponding acid. The polypeptide is Betaine aldehyde dehydrogenase (Acinetobacter baumannii (strain SDF)).